The sequence spans 177 residues: MSRIGKKPVAIPSGVTANVDGQLISVKGGKGQLSFAAPEDVTVVLGDGGIEVSPRNETKRARAMWGMTRSMVNNLVVGVSKGFERKLEITGVGYKAAVSGKNLQLSLGFSHDVTFPIPDGISIVAAKPTEVAISGIDKRQVGQIASEIRALRPPEPYKGKGVKYAGEFIFRKEGKKK.

This sequence belongs to the universal ribosomal protein uL6 family. As to quaternary structure, part of the 50S ribosomal subunit.

In terms of biological role, this protein binds to the 23S rRNA, and is important in its secondary structure. It is located near the subunit interface in the base of the L7/L12 stalk, and near the tRNA binding site of the peptidyltransferase center. The sequence is that of Large ribosomal subunit protein uL6 from Methylocella silvestris (strain DSM 15510 / CIP 108128 / LMG 27833 / NCIMB 13906 / BL2).